Here is a 430-residue protein sequence, read N- to C-terminus: MNDLLPAAAAPAGARALPLRHADPEIWRAVDAERQRQMHSIELIASENFVSQAVLDAQGSVMTNKYAEGYPGRRYYGGCRHVDVAERAAIERARRLFGCEYANVQPHSGSQANQAVYLALLAPGDRILGLDLKAGGHLTHGARVNLSGKWFEALSYGVDPVSHRIDMDEVERTARRERPRLIIAGGSAYARVPDFARFRAIADATGALFVADMAHYAGLVAGGAFPSPVPFAHVTTTTTHKTLRGPRGGMILTDDADIARRIDAAVFPGLQGGPLMHVIAAKAVALGEALQPGFRAYARAVIDNARALCARLAEGGLSIVSGGTDCHLGVVDLRPWGLAGNAAERALEEAGITVNKNAVPGDAASPAVTSGIRVGSAACTSRGMGPAEFRQIGDLVLAVLGGLRDGGQAGGRDAVPARAAELSRRFPLPY.

Residues Leu-132 and 136-138 (GHL) contribute to the (6S)-5,6,7,8-tetrahydrofolate site. Residue Lys-241 is modified to N6-(pyridoxal phosphate)lysine.

The protein belongs to the SHMT family. In terms of assembly, homodimer. Pyridoxal 5'-phosphate serves as cofactor.

The protein resides in the cytoplasm. The enzyme catalyses (6R)-5,10-methylene-5,6,7,8-tetrahydrofolate + glycine + H2O = (6S)-5,6,7,8-tetrahydrofolate + L-serine. Its pathway is one-carbon metabolism; tetrahydrofolate interconversion. It functions in the pathway amino-acid biosynthesis; glycine biosynthesis; glycine from L-serine: step 1/1. Catalyzes the reversible interconversion of serine and glycine with tetrahydrofolate (THF) serving as the one-carbon carrier. This reaction serves as the major source of one-carbon groups required for the biosynthesis of purines, thymidylate, methionine, and other important biomolecules. Also exhibits THF-independent aldolase activity toward beta-hydroxyamino acids, producing glycine and aldehydes, via a retro-aldol mechanism. This Bordetella parapertussis (strain 12822 / ATCC BAA-587 / NCTC 13253) protein is Serine hydroxymethyltransferase 1.